We begin with the raw amino-acid sequence, 331 residues long: Junctional sarcoplasmic reticulum protein 1 (331 aa).

Disordered regions lie at residues 1-118 (MSMT…EELP) and 157-331 (RVPE…KGRD). The tract at residues 3-76 (MTTRAWEELD…EKEPAARGTP (74 aa)) is mediates interaction with CACNA1S. Composition is skewed to basic and acidic residues over residues 21–35 (LEDH…EDRA) and 61–71 (TRPKKMEKEPA). Composition is skewed to pro residues over residues 103-112 (PLQPPPPPPA) and 161-175 (PWVP…PSSP). 2 stretches are compositionally biased toward basic and acidic residues: residues 222–242 (AVRE…PRRE) and 250–302 (PRKE…EPRK). Residues 320–331 (SRQKLRAGKGRD) show a composition bias toward basic residues.

As to quaternary structure, interacts with CACNA1S, CACNB1 and calsequestrin.

The protein resides in the sarcoplasmic reticulum membrane. It localises to the endoplasmic reticulum membrane. Functionally, involved in skeletal muscle excitation/contraction coupling (EC), probably acting as a regulator of the voltage-sensitive calcium channel CACNA1S. EC is a physiological process whereby an electrical signal (depolarization of the plasma membrane) is converted into a chemical signal, a calcium gradient, by the opening of ryanodine receptor calcium release channels. May regulate CACNA1S membrane targeting and activity. The sequence is that of Junctional sarcoplasmic reticulum protein 1 (JSRP1) from Homo sapiens (Human).